Here is a 319-residue protein sequence, read N- to C-terminus: GCN5-related N-acetyltransferase 5, chloroplastic (319 aa).

The transit peptide at 1–55 (MAALSISLAFSVDSLKPTQSTKFGFSSSSHRYPLLYSCKSHRSNLRFAFPPSSVS) directs the protein to the chloroplast. The 189-residue stretch at 109 to 297 (MWVRVMRHEE…KHLMRKKLLP (189 aa)) folds into the N-acetyltransferase domain. Acetyl-CoA is bound by residues 218–220 (MTV), 226–231 (RRGIGW), 258–260 (DEA), and Tyr-265. Tyr-265 acts as the Proton donor in catalysis.

It belongs to the acetyltransferase family. GNAT subfamily. In terms of assembly, oligomer. Post-translationally, autoacetylated. Expressed in green tissues.

It is found in the plastid. It localises to the chloroplast. It catalyses the reaction an N-terminal L-alpha-aminoacyl-[protein] + acetyl-CoA = N-terminal N(alpha)-acetyl-L-alpha-aminoacyl-[protein] + CoA + H(+). It carries out the reaction L-lysyl-[protein] + acetyl-CoA = N(6)-acetyl-L-lysyl-[protein] + CoA + H(+). The enzyme catalyses N-terminal L-alanyl-[protein] + acetyl-CoA = N-terminal N(alpha)-acetyl-L-alanyl-[protein] + CoA + H(+). The catalysed reaction is N-terminal L-seryl-[protein] + acetyl-CoA = N-terminal N(alpha)-acetyl-L-seryl-[protein] + CoA + H(+). It catalyses the reaction N-terminal L-methionyl-[protein] + acetyl-CoA = N-terminal N(alpha)-acetyl-L-methionyl-[protein] + CoA + H(+). It carries out the reaction N-terminal L-valyl-[protein] + acetyl-CoA = N-terminal N(alpha)-acetyl-L-valyl-[protein] + CoA + H(+). The enzyme catalyses N-terminal L-threonyl-[protein] + acetyl-CoA = N-terminal N(alpha)-acetyl-L-threonyl-[protein] + CoA + H(+). Functionally, protein acetyltransferase with dual specificity triggering both N-alpha-acetylation (NTA), with a large spectrum of modified N-termini, including methionine, alanine, serine and to a lower extent threonine and valine as substrates, and epsilon-lysine acetylation (KA). The chain is GCN5-related N-acetyltransferase 5, chloroplastic from Arabidopsis thaliana (Mouse-ear cress).